The primary structure comprises 122 residues: Large ribosomal subunit protein uL14 (122 aa).

Belongs to the universal ribosomal protein uL14 family. As to quaternary structure, part of the 50S ribosomal subunit. Forms a cluster with proteins L3 and L19. In the 70S ribosome, L14 and L19 interact and together make contacts with the 16S rRNA in bridges B5 and B8.

Its function is as follows. Binds to 23S rRNA. Forms part of two intersubunit bridges in the 70S ribosome. This is Large ribosomal subunit protein uL14 from Ruthia magnifica subsp. Calyptogena magnifica.